Here is a 105-residue protein sequence, read N- to C-terminus: MTQSPFTLEANGLVLAVRLTPRASRTGLDGVRTEASGRPVLSLRVAAPPVEGAANAALTAFVAKSLGLRKAEVTLLSGETSRTKRLHLSGDPQMLAARVEAWLGG.

Belongs to the UPF0235 family.

This Methylorubrum extorquens (strain CM4 / NCIMB 13688) (Methylobacterium extorquens) protein is UPF0235 protein Mchl_2407.